A 789-amino-acid chain; its full sequence is Glycerol-3-phosphate acyltransferase (789 aa).

Residues 276-281 (HRSYID) carry the HXXXXD motif motif.

It belongs to the GPAT/DAPAT family.

The protein localises to the cell membrane. The enzyme catalyses sn-glycerol 3-phosphate + an acyl-CoA = a 1-acyl-sn-glycero-3-phosphate + CoA. Its pathway is phospholipid metabolism; CDP-diacylglycerol biosynthesis; CDP-diacylglycerol from sn-glycerol 3-phosphate: step 1/3. The chain is Glycerol-3-phosphate acyltransferase from Mycobacterium bovis (strain ATCC BAA-935 / AF2122/97).